A 269-amino-acid chain; its full sequence is Tryptophan synthase alpha chain (269 aa).

Active-site proton acceptor residues include Glu49 and Asp60.

It belongs to the TrpA family. In terms of assembly, tetramer of two alpha and two beta chains.

The enzyme catalyses (1S,2R)-1-C-(indol-3-yl)glycerol 3-phosphate + L-serine = D-glyceraldehyde 3-phosphate + L-tryptophan + H2O. The protein operates within amino-acid biosynthesis; L-tryptophan biosynthesis; L-tryptophan from chorismate: step 5/5. The alpha subunit is responsible for the aldol cleavage of indoleglycerol phosphate to indole and glyceraldehyde 3-phosphate. The polypeptide is Tryptophan synthase alpha chain (Klebsiella aerogenes (Enterobacter aerogenes)).